A 513-amino-acid polypeptide reads, in one-letter code: MSIKAEEISALIKQQLESYQDEISVEETGTVTYVGDGVARAHGLNNALQGELLLFDNGVYGMVQNLEASDVGIVILGDFTGITEGDTVKRTGRIMEVPVGDQLIGRVVNPLGQAIDGKGDISTDKTRPIEHKAPGVMDRQGVSEPLQTGIKAIDALVPIGRGQRELIIGDRKTGKSSIAIDTIINQKDQDMICIYVAIGQKASTVRAQVSTLEKFGAMDYTIVVTASPSEPAPMLYIAPYAGAAMGEEFMHNGKHVLIVYDDLTKQADAYRELSLILRRAPGREAYPGDIFYTHSRLLERAAKLNDELGGGSMTALPVIETKAGDVSAYIPTNVISITDGQIFLNSDSFYSGVRPAMDAGTSVSRVGGDAQIKAMKKVAGTLRLDLSAYKELESFAQFGSDLDAATQARLARGERTVEVLKQGLHESVPVAKEVIILFALTHGHLDKLEVADVLRYQNELFDYMDASHKDLEDSITTTGNLPEGNTLEDAIKEFDGMFQPTAKADDTAAQTAD.

ATP is bound at residue 169 to 176 (GDRKTGKS).

It belongs to the ATPase alpha/beta chains family. F-type ATPases have 2 components, CF(1) - the catalytic core - and CF(0) - the membrane proton channel. CF(1) has five subunits: alpha(3), beta(3), gamma(1), delta(1), epsilon(1). CF(0) has three main subunits: a(1), b(2) and c(9-12). The alpha and beta chains form an alternating ring which encloses part of the gamma chain. CF(1) is attached to CF(0) by a central stalk formed by the gamma and epsilon chains, while a peripheral stalk is formed by the delta and b chains.

It is found in the cell membrane. The enzyme catalyses ATP + H2O + 4 H(+)(in) = ADP + phosphate + 5 H(+)(out). Functionally, produces ATP from ADP in the presence of a proton gradient across the membrane. The alpha chain is a regulatory subunit. The sequence is that of ATP synthase subunit alpha from Levilactobacillus brevis (strain ATCC 367 / BCRC 12310 / CIP 105137 / JCM 1170 / LMG 11437 / NCIMB 947 / NCTC 947) (Lactobacillus brevis).